The chain runs to 338 residues: UPF0324 membrane protein TauZ (338 aa).

10 consecutive transmembrane segments (helical) span residues 12–31 (IEAA…TAQF), 36–55 (YGAP…NFLA), 75–92 (LGVA…LAAL), 96–118 (AIAL…SRLV), 125–147 (ALLT…AAVL), 162–184 (LSVT…FFGF), 191–213 (VFLG…IGPE), 223–245 (LIRV…ARGL), 258–280 (PGFV…PAAV), and 315–337 (AIAL…LHVL).

It belongs to the UPF0324 family.

The protein resides in the cell membrane. The protein is UPF0324 membrane protein TauZ (tauZ) of Paracoccus denitrificans.